The following is a 395-amino-acid chain: RNA polymerase II elongation factor ELL3 (395 aa).

2 disordered regions span residues Leu129–Met177 and Pro189–Glu281. Ser242 carries the post-translational modification Phosphoserine. A compositionally biased stretch (acidic residues) spans Gln243–Gly260. Positions Ser269–Pro279 are enriched in low complexity. One can recognise an OCEL domain in the interval Pro283 to Arg393.

Belongs to the ELL/occludin family. Component of the little elongation complex (LEC), at least composed of ELL (ELL, ELL2 or ELL3), ZC3H8, ICE1 and ICE2. Component of the super elongation complex (SEC), at least composed of EAF1, EAF2, CDK9, MLLT3/AF9, AFF (AFF1 or AFF4), the P-TEFb complex and ELL (ELL, ELL2 or ELL3). Interacts with AFF4. As to expression, actively expressed in embryonic stem cells (ES cells), while it is weakly expressed in differentiated cells.

The protein resides in the nucleus. Functionally, enhancer-binding elongation factor that specifically binds enhancers in embryonic stem cells (ES cells), marks them, and is required for their future activation during stem cell specification. Elongation factor component of the super elongation complex (SEC), a complex required to increase the catalytic rate of RNA polymerase II transcription by suppressing transient pausing by the polymerase at multiple sites along the DNA. Component of the little elongation complex (LEC), a complex required to regulate small nuclear RNA (snRNA) gene transcription by RNA polymerase II and III. Does not only bind to enhancer regions of active genes, but also marks the enhancers that are in a poised or inactive state in ES cells and is required for establishing proper RNA polymerase II occupancy at developmentally regulated genes in a cohesin-dependent manner. Probably required for priming developmentally regulated genes for later recruitment of the super elongation complex (SEC), for transcriptional activation during differentiation. Required for recruitment of P-TEFb within SEC during differentiation. Probably preloaded on germ cell chromatin, suggesting that it may prime gene activation by marking enhancers as early as in the germ cells. Promoting epithelial-mesenchymal transition (EMT). The chain is RNA polymerase II elongation factor ELL3 (Ell3) from Mus musculus (Mouse).